We begin with the raw amino-acid sequence, 1061 residues long: Error-prone DNA polymerase (1061 aa).

The protein belongs to the DNA polymerase type-C family. DnaE2 subfamily.

The protein resides in the cytoplasm. It catalyses the reaction DNA(n) + a 2'-deoxyribonucleoside 5'-triphosphate = DNA(n+1) + diphosphate. DNA polymerase involved in damage-induced mutagenesis and translesion synthesis (TLS). It is not the major replicative DNA polymerase. The chain is Error-prone DNA polymerase from Bdellovibrio bacteriovorus (strain ATCC 15356 / DSM 50701 / NCIMB 9529 / HD100).